Consider the following 553-residue polypeptide: 5'-nucleotidase domain-containing protein 2 (553 aa).

The segment at 26–51 (SSSPSCPGCGPPGPGAHCPSTPRSAP) is disordered. Asp-106 serves as the catalytic Nucleophile. Residues Asp-106, Asp-108, and Asp-391 each coordinate Mg(2+). Asp-108 acts as the Proton donor in catalysis.

Belongs to the 5'(3')-deoxyribonucleotidase family. As to quaternary structure, interacts with tyrosine 3-monooxygenase TH; the interaction results in reduced phosphorylation and decreased catalytic activity of TH. In terms of tissue distribution, expressed in eye iridocorneal angle.

It localises to the cytoplasm. Promotes dephosphorylation of tyrosine 3-monooxygenase TH which decreases TH catalytic activity and leads to reduced synthesis of catecholamines including dopamine, noradrenaline and adrenaline. The exact mechanism of activity is unknown but may act as a phosphatase or promote the activity of phosphatases or may inhibit phosphorylation by acting as a barrier to interfere with protein kinase access. The polypeptide is 5'-nucleotidase domain-containing protein 2 (Nt5dc2) (Rattus norvegicus (Rat)).